The chain runs to 670 residues: E3 ubiquitin-protein ligase MAG2 (670 aa).

Disordered regions lie at residues 1–84 (MVEP…TSTR) and 124–145 (EVEREKSRSSSSKKSNRRRDEH). Positions 20–39 (DTLNATSNSSKQGVSNNKRN) are enriched in polar residues. The segment covering 51-66 (SDGRDNAHNYHGEGRR) has biased composition (basic and acidic residues). The RING-type zinc-finger motif lies at 195 to 250 (CSICLSEEPVAPRMVTCGHIFCLSCLLNFFSIEETVKNKETGYSKKKKYKECPLCG). The segment at 609–670 (TEDEKASKEN…LFSSNHQALG (62 aa)) is disordered. Residues 610 to 622 (EDEKASKENKEFQ) are compositionally biased toward basic and acidic residues. Residues 637–649 (VTDSTDSPPTSNG) show a composition bias toward low complexity.

This sequence belongs to the RNF10 family.

Its subcellular location is the cytoplasm. The enzyme catalyses S-ubiquitinyl-[E2 ubiquitin-conjugating enzyme]-L-cysteine + [acceptor protein]-L-lysine = [E2 ubiquitin-conjugating enzyme]-L-cysteine + N(6)-ubiquitinyl-[acceptor protein]-L-lysine.. It functions in the pathway protein modification; protein ubiquitination. Its function is as follows. E3 ubiquitin-protein ligase involved in the degradation of non-functional 18S rRNAs in response to stalled ribosomes. Catalyzes monoubiquitination of RPS3/uS3 in response to stalled ribosomes, initiating a HEL2-dependent response that activates the degradation of non-functional 18S rRNAs. The polypeptide is E3 ubiquitin-protein ligase MAG2 (Saccharomyces cerevisiae (strain ATCC 204508 / S288c) (Baker's yeast)).